The sequence spans 657 residues: MLELTSEFKPSPDQQEAIKGIVKSIKKGNKYQTLLGVTGSGKTFTMANVIKELNIPTLIMSHNKSLCAQLYSEFKGFFSKNHVEYFISYYDYYQPEAYIPRTDVFIEKDSSTNEDLERLRLSATASLLSYEDVVCIASVSANYGLGNPNEYIGMVLIFELGMQISQKELLKKLVDMGYKRNDNFFDRADFRVQGDIIDIYPAYYEDEVVRLEFFGDELDAMYHYNVLENKKGKDLKRFILYPTSQFSVGETRLKQAIKDIKAELNERLAYFEHENKLVEYQRLKQRVEFDLEMLTSTGMCKGVENYARHLTGLKEGDTPYTLFDYFAIKDRKFLVIVDESHVSLPQFRGMFAGDRSRKQTLVDYGFRLPSALDNRPLMFDEFIHKNCQFLFVSATPAPLELELSKENIFHQIMRPTGLLDPLIELKDSDNQVEILFDEAKKVIQRNERVLVTVLTKKLAEELTRYYLELGIKVKYMHSDIDAIERNEIIRGLRSGAFDMLIGINLLREGLDLPEVSLIAIMDADKEGFLRSTTSLIQTMGRAARNVNGKVLLFCKKITKSMQEAMDTTNERRKLQMAYNKKYNITPTSVKRHIEESLKNEEDLGEIYRKGKKLEKMPASERAKLVKELRKQMLEAAKALEFEKAAAIRDEINKLRDL.

Residues Lys23–Arg414 form the Helicase ATP-binding domain. Gly36–Thr43 lines the ATP pocket. The Beta-hairpin motif lies at Tyr89 to Thr112. Residues Gln431–Ile593 enclose the Helicase C-terminal domain. The UVR domain occupies Ala622–Leu657.

Belongs to the UvrB family. As to quaternary structure, forms a heterotetramer with UvrA during the search for lesions. Interacts with UvrC in an incision complex.

It localises to the cytoplasm. The UvrABC repair system catalyzes the recognition and processing of DNA lesions. A damage recognition complex composed of 2 UvrA and 2 UvrB subunits scans DNA for abnormalities. Upon binding of the UvrA(2)B(2) complex to a putative damaged site, the DNA wraps around one UvrB monomer. DNA wrap is dependent on ATP binding by UvrB and probably causes local melting of the DNA helix, facilitating insertion of UvrB beta-hairpin between the DNA strands. Then UvrB probes one DNA strand for the presence of a lesion. If a lesion is found the UvrA subunits dissociate and the UvrB-DNA preincision complex is formed. This complex is subsequently bound by UvrC and the second UvrB is released. If no lesion is found, the DNA wraps around the other UvrB subunit that will check the other stand for damage. The polypeptide is UvrABC system protein B (Campylobacter jejuni subsp. jejuni serotype O:2 (strain ATCC 700819 / NCTC 11168)).